The primary structure comprises 458 residues: MSDNKFIIGSEEWCAFPALGVPAIKARVDSGARTSSIHAVNIRPFKREGEPWVSFELHPIQNSRKIILRCESKVVDRRNIKSSNGESEKRYVIASVIQLGGNAWEVELTLTNRDSMGYRMLLGREAMSNKTLVDPSESFCLGEKGDLEVEQLYGVKTAKKSGLKIGLLASNPDLYSNRRIIEAGEQRGHEMVFLNISQCYLKLDASSPEVHYRGGRVLNNVDAVIPRIRPSMTFYGCALTRHFESLNIEALNTSDAITRSRDKLFSLQLLQKNNLDIPTSGFANSPVDTKDLIDMVGGAPLIVKLLEGTQGKGVVLAETTKAAESVINAFKSLRVNLLVQEFIKEAQGKDLRCFVIDGKIVASIERTAAPGEFRANIHMGGSASIVSVSAAEKQLAIKAAKTMGLRVAGVDIIRSSRGPLLLEINSSPGLEGIESATGIDIAGAMIESIEKKLGWKAD.

The interval 1–162 (MSDNKFIIGS…YGVKTAKKSG (162 aa)) is unknown. The tract at residues 163-458 (LKIGLLASNP…IEKKLGWKAD (296 aa)) is alpha-L-glutamate ligase. Residues 267 to 450 (LQLLQKNNLD…IAGAMIESIE (184 aa)) enclose the ATP-grasp domain. Residues Lys304, 341–342 (EF), Asp350, and 374–376 (RAN) contribute to the ATP site. Asp411, Glu423, and Asn425 together coordinate Mg(2+). 3 residues coordinate Mn(2+): Asp411, Glu423, and Asn425.

It in the C-terminal section; belongs to the RimK family. Mg(2+) serves as cofactor. Mn(2+) is required as a cofactor.

The polypeptide is Probable alpha-L-glutamate ligase (Shewanella pealeana (strain ATCC 700345 / ANG-SQ1)).